The following is a 502-amino-acid chain: Glycerol kinase (502 aa).

An ADP-binding site is contributed by Thr-14. ATP-binding residues include Thr-14, Thr-15, and Ser-16. Residue Thr-14 coordinates sn-glycerol 3-phosphate. Arg-18 serves as a coordination point for ADP. Sn-glycerol 3-phosphate is bound by residues Arg-84, Glu-85, and Tyr-136. Glycerol contacts are provided by Arg-84, Glu-85, and Tyr-136. Phosphohistidine; by HPr is present on His-232. Asp-246 is a binding site for sn-glycerol 3-phosphate. Residues Asp-246 and Gln-247 each coordinate glycerol. Residues Thr-268 and Gly-311 each coordinate ADP. ATP is bound by residues Thr-268, Gly-311, Gln-315, and Gly-412. ADP contacts are provided by Gly-412 and Asn-416.

It belongs to the FGGY kinase family. Homotetramer and homodimer (in equilibrium). Post-translationally, the phosphoenolpyruvate-dependent sugar phosphotransferase system (PTS), including enzyme I, and histidine-containing protein (HPr) are required for the phosphorylation, which leads to the activation of the enzyme.

It carries out the reaction glycerol + ATP = sn-glycerol 3-phosphate + ADP + H(+). The protein operates within polyol metabolism; glycerol degradation via glycerol kinase pathway; sn-glycerol 3-phosphate from glycerol: step 1/1. With respect to regulation, activated by phosphorylation and inhibited by fructose 1,6-bisphosphate (FBP). Functionally, key enzyme in the regulation of glycerol uptake and metabolism. Catalyzes the phosphorylation of glycerol to yield sn-glycerol 3-phosphate. This is Glycerol kinase from Streptococcus pneumoniae serotype 19F (strain G54).